Consider the following 160-residue polypeptide: Transcription elongation factor GreA (160 aa).

The stretch at Ser49 to Ala75 forms a coiled coil.

It belongs to the GreA/GreB family.

Functionally, necessary for efficient RNA polymerase transcription elongation past template-encoded arresting sites. The arresting sites in DNA have the property of trapping a certain fraction of elongating RNA polymerases that pass through, resulting in locked ternary complexes. Cleavage of the nascent transcript by cleavage factors such as GreA or GreB allows the resumption of elongation from the new 3'terminus. GreA releases sequences of 2 to 3 nucleotides. The sequence is that of Transcription elongation factor GreA from Clostridium botulinum (strain Eklund 17B / Type B).